The following is a 713-amino-acid chain: MALQASSSPSMFRAIPTNTNASCRRKLQVRASAAAAAANGGGDGKVMMRKEAASGAWKIDYSGEKPATPLLDTVNYPVHMKNLSTPELEQLAAELRAEIVHTVSKTGGHLSSSLGVVELAVALHHVFDTPEDKIIWDVGHQAYPHKILTGRRSRMHTIRQTSGLAGFPKRDESAHDAFGAGHSSTSISAALGMAVARDLLGKKNHVISVIGDGAMTAGQAYEAMNNSGYLDSNMIVVLNDNKQVSLPTATLDGPATPVGALSKALTKLQSSTKLRRLREAAKTVTKQIGGQAHEVAAKVDEYARGMVSASGSTLFEELGLYYIGPVDGHSVDDLVAIFNKVKSMPAPGPVLVHIVTEKGKGYPPAEAAADRMHGVVKFDPTTGRQFKSKCSTLSYTQYFAEALIREAEADDKVVGIHAAMGGGTGLNYFHKRFPERCFDVGIAEQHAVTFAAGLAAEGLKPFCAIYSSFLQRGYDQVVHDVDLQRLPVRFAMDRAGLVGADGPTHCGAFDVAYMACLPNMVVMAPADEAELMHMVATAAAIDDRPSCFRFPRGNGIGAVLPPNHKGTPLEVGKGRVLVGGNRVALLGYGTMVQACMKAAEALKEHGIYVTVADARFCKPLDTGLIRELAAEHEVLVTVEEGSIGGFGSHVAHYLSLSGLLDGPLKLRSMFLPDRYIDHGAPVDQLEEAGLTPRHIAATVLSLLGRPLEALQLS.

The transit peptide at Met-1–Arg-30 directs the protein to the chloroplast. Thiamine diphosphate contacts are provided by residues His-140 and Gly-181 to Ser-183. Asp-212 contacts Mg(2+). Thiamine diphosphate is bound by residues Gly-213–Ala-214, Asn-241, Tyr-362, and Glu-444. Asn-241 lines the Mg(2+) pocket.

The protein belongs to the transketolase family. DXPS subfamily. In terms of assembly, homodimer. Mg(2+) serves as cofactor. It depends on thiamine diphosphate as a cofactor.

Its subcellular location is the plastid. The protein localises to the chloroplast. The enzyme catalyses D-glyceraldehyde 3-phosphate + pyruvate + H(+) = 1-deoxy-D-xylulose 5-phosphate + CO2. It functions in the pathway metabolic intermediate biosynthesis; 1-deoxy-D-xylulose 5-phosphate biosynthesis; 1-deoxy-D-xylulose 5-phosphate from D-glyceraldehyde 3-phosphate and pyruvate: step 1/1. Functionally, catalyzes the acyloin condensation reaction between C atoms 2 and 3 of pyruvate and glyceraldehyde 3-phosphate to yield 1-deoxy-D-xylulose-5-phosphate (DXP). Is a limiting enzyme for plastidic isoprenoid biosynthesis and essential for chloroplast development. In Oryza sativa subsp. japonica (Rice), this protein is Probable 1-deoxy-D-xylulose-5-phosphate synthase 2, chloroplastic.